The following is a 134-amino-acid chain: UPF0412 protein YaaI (134 aa).

A signal peptide spans 1–23 (MRSVLTISASLLFGLALSSVAHA).

This sequence belongs to the UPF0412 family.

The polypeptide is UPF0412 protein YaaI (Salmonella paratyphi B (strain ATCC BAA-1250 / SPB7)).